Consider the following 446-residue polypeptide: MRYLSEIKNKQITVLGLGVTGLGIVRFLVSQGLTPTVVDSRINPPGIDWLKQNTPTLTTRFGDLDSADLCASDMIIISPGLSLTIPAIAKAINAGVEVIGDVELFARINTKPVVAVTGSNGKSTVVTLAQQVLLAAGYKAALGGNIGTAVLDLLQSDLSNNDVDVYVLELSSFQLDTTTSLQPISATVLNVSEDHLDRYASYQAYIDSKLSIYNNAALVITNADDEATHSKAKSQLSFGANQGDYSLGEYQQQTYFMQANKAFLPVTSLAVVGKHNYLNALAVMALLSPFNISKAQYSTAFSQFNGLAHRCQFVAERAGVKYFNDSKATNVGATIAAIDSLATNGQQLIVIAGGDAKGADLNALTPYLQQHVKALICFGKDAKDLMALTNKSHLTNNMSEAVTLAKQLSEPGNIVLLAPACASIDMYNNYMQRGDDFIQCVMAEQP.

118 to 124 (GSNGKST) is a binding site for ATP.

This sequence belongs to the MurCDEF family.

The protein resides in the cytoplasm. The enzyme catalyses UDP-N-acetyl-alpha-D-muramoyl-L-alanine + D-glutamate + ATP = UDP-N-acetyl-alpha-D-muramoyl-L-alanyl-D-glutamate + ADP + phosphate + H(+). It participates in cell wall biogenesis; peptidoglycan biosynthesis. Its function is as follows. Cell wall formation. Catalyzes the addition of glutamate to the nucleotide precursor UDP-N-acetylmuramoyl-L-alanine (UMA). The sequence is that of UDP-N-acetylmuramoylalanine--D-glutamate ligase from Pseudoalteromonas translucida (strain TAC 125).